The sequence spans 550 residues: Hydroxylamine reductase (550 aa).

[2Fe-2S] cluster-binding residues include Cys3, Cys6, Cys18, and Cys25. 8 residues coordinate hybrid [4Fe-2O-2S] cluster: His249, Glu273, Cys317, Cys405, Cys433, Cys458, Glu492, and Lys494. Cys405 is subject to Cysteine persulfide.

The protein belongs to the HCP family. [2Fe-2S] cluster is required as a cofactor. It depends on hybrid [4Fe-2O-2S] cluster as a cofactor.

The protein localises to the cytoplasm. It carries out the reaction A + NH4(+) + H2O = hydroxylamine + AH2 + H(+). Its function is as follows. Catalyzes the reduction of hydroxylamine to form NH(3) and H(2)O. The chain is Hydroxylamine reductase from Salmonella agona (strain SL483).